The following is a 200-amino-acid chain: Probable GTP-binding protein EngB (200 aa).

An EngB-type G domain is found at 25 to 199 (SGYEVAFAGR…ISVLDRWYEW (175 aa)). Residues 33 to 40 (GRSNAGKS), 60 to 64 (GRTQL), 78 to 81 (DLPG), 145 to 148 (TKAD), and 178 to 180 (FSS) contribute to the GTP site. Ser-40 and Thr-62 together coordinate Mg(2+).

This sequence belongs to the TRAFAC class TrmE-Era-EngA-EngB-Septin-like GTPase superfamily. EngB GTPase family. The cofactor is Mg(2+).

Functionally, necessary for normal cell division and for the maintenance of normal septation. This chain is Probable GTP-binding protein EngB, found in Legionella pneumophila (strain Paris).